A 311-amino-acid chain; its full sequence is MIKLLFMGTPQFSATVLKGLLDNPAYEILGVVTQPDRAVGRKKDIKVTPVKQLALEHGISIYQPEKLSGSQELIEIMGLGADGIITAAFGQFLPTILLDSVSFAINVHASLLPKYRGGAPIHYAIMNGDKEAGVTIMEMIKEMDAGDMVAKASTPILETDNVGTLFEKLAIIGRDLLLDSLPAYLSGELKPIPQDHSQATFSPNISPEHEKLDWTMSNQEVFNHIRGMNPWPVAHTFLEGQRLKIYEAQLAEGEGLPGQVVVKTKKSLVIATGQGALSLIVVQPAGKPKMSIIDFLNGIGRKLEVGDIIGR.

Position 110-113 (110-113 (SLLP)) interacts with (6S)-5,6,7,8-tetrahydrofolate.

The protein belongs to the Fmt family.

The catalysed reaction is L-methionyl-tRNA(fMet) + (6R)-10-formyltetrahydrofolate = N-formyl-L-methionyl-tRNA(fMet) + (6S)-5,6,7,8-tetrahydrofolate + H(+). In terms of biological role, attaches a formyl group to the free amino group of methionyl-tRNA(fMet). The formyl group appears to play a dual role in the initiator identity of N-formylmethionyl-tRNA by promoting its recognition by IF2 and preventing the misappropriation of this tRNA by the elongation apparatus. This chain is Methionyl-tRNA formyltransferase, found in Streptococcus pyogenes serotype M1.